The chain runs to 56 residues: Large ribosomal subunit protein bL32 (56 aa).

Residues 1–16 (MAVQKSKKSRSRRDMR) show a composition bias toward basic residues. The segment at 1-56 (MAVQKSKKSRSRRDMRRSHDAIDGPTLSVDSTTGETHRRHHVTADGYYKGRKVVNK) is disordered.

The protein belongs to the bacterial ribosomal protein bL32 family.

In Idiomarina loihiensis (strain ATCC BAA-735 / DSM 15497 / L2-TR), this protein is Large ribosomal subunit protein bL32.